The sequence spans 322 residues: N-acetyl-gamma-glutamyl-phosphate reductase 2 (322 aa).

C117 is an active-site residue.

The protein belongs to the NAGSA dehydrogenase family. Type 2 subfamily.

The protein localises to the cytoplasm. It carries out the reaction N-acetyl-L-glutamate 5-semialdehyde + phosphate + NADP(+) = N-acetyl-L-glutamyl 5-phosphate + NADPH + H(+). The protein operates within amino-acid biosynthesis; L-arginine biosynthesis; N(2)-acetyl-L-ornithine from L-glutamate: step 3/4. Functionally, catalyzes the NADPH-dependent reduction of N-acetyl-5-glutamyl phosphate to yield N-acetyl-L-glutamate 5-semialdehyde. This chain is N-acetyl-gamma-glutamyl-phosphate reductase 2, found in Nostoc sp. (strain PCC 7120 / SAG 25.82 / UTEX 2576).